Consider the following 883-residue polypeptide: Leucine--tRNA ligase (883 aa).

A 'HIGH' region motif is present at residues 43-53; that stretch reads PYPSGRIHIGH. The short motif at 630–634 is the 'KMSKS' region element; it reads KMSKS. Residue K633 participates in ATP binding.

This sequence belongs to the class-I aminoacyl-tRNA synthetase family.

The protein resides in the cytoplasm. The enzyme catalyses tRNA(Leu) + L-leucine + ATP = L-leucyl-tRNA(Leu) + AMP + diphosphate. The chain is Leucine--tRNA ligase from Nitrobacter winogradskyi (strain ATCC 25391 / DSM 10237 / CIP 104748 / NCIMB 11846 / Nb-255).